Here is a 187-residue protein sequence, read N- to C-terminus: Orotate phosphoribosyltransferase (187 aa).

5-phospho-alpha-D-ribose 1-diphosphate-binding positions include Arg98, Lys99, Lys102, His104, and 128 to 136 (EDVTTTGGS). Residues Thr132 and Arg160 each contribute to the orotate site.

The protein belongs to the purine/pyrimidine phosphoribosyltransferase family. PyrE subfamily. As to quaternary structure, homodimer. Requires Mg(2+) as cofactor.

It catalyses the reaction orotidine 5'-phosphate + diphosphate = orotate + 5-phospho-alpha-D-ribose 1-diphosphate. It functions in the pathway pyrimidine metabolism; UMP biosynthesis via de novo pathway; UMP from orotate: step 1/2. Functionally, catalyzes the transfer of a ribosyl phosphate group from 5-phosphoribose 1-diphosphate to orotate, leading to the formation of orotidine monophosphate (OMP). This chain is Orotate phosphoribosyltransferase, found in Bradyrhizobium diazoefficiens (strain JCM 10833 / BCRC 13528 / IAM 13628 / NBRC 14792 / USDA 110).